The primary structure comprises 427 residues: MLETVENGDDVKAIMLEIGRRAKAAARPLAVASAERKHAALVAVAGALGARAAEILAANALDLENARESGVANAFIDRLTLTESRIRDMADGIRAIAELKDPVGEVIAEWDRPNGLHIERVRTPLGVIGVIYESRPNVTADAGALCLKAGNAVILRGGSDSFHSSRAIHACLVEGLKAAGLPADAIQMVPVADRAAVGAMLTGLNGAVDVIVPRGGKSLVARVQNEARVPVFAHLEGLCHIYVDASADLAMATQIVVNAKMRRTGICGAAETLLIDRNAAEKLARPLIEALVEAGCEVRAESSLSSVMPGLKSATDEDWATEYLDAIISVKLVDGISGAIEHINIWSSAHTEAIIAEEPRVVERFFSEIDSAILLHNASTQFADGGEFGMGGEIGIATGKMHARGPVGVEQLTSFKYRVRGTGQVRP.

This sequence belongs to the gamma-glutamyl phosphate reductase family.

It is found in the cytoplasm. It carries out the reaction L-glutamate 5-semialdehyde + phosphate + NADP(+) = L-glutamyl 5-phosphate + NADPH + H(+). It functions in the pathway amino-acid biosynthesis; L-proline biosynthesis; L-glutamate 5-semialdehyde from L-glutamate: step 2/2. Its function is as follows. Catalyzes the NADPH-dependent reduction of L-glutamate 5-phosphate into L-glutamate 5-semialdehyde and phosphate. The product spontaneously undergoes cyclization to form 1-pyrroline-5-carboxylate. This chain is Gamma-glutamyl phosphate reductase, found in Sinorhizobium medicae (strain WSM419) (Ensifer medicae).